We begin with the raw amino-acid sequence, 483 residues long: Argininosuccinate lyase (483 aa).

The protein belongs to the lyase 1 family. Argininosuccinate lyase subfamily.

It is found in the cytoplasm. It carries out the reaction 2-(N(omega)-L-arginino)succinate = fumarate + L-arginine. It functions in the pathway amino-acid biosynthesis; L-arginine biosynthesis; L-arginine from L-ornithine and carbamoyl phosphate: step 3/3. The polypeptide is Argininosuccinate lyase (Archaeoglobus fulgidus (strain ATCC 49558 / DSM 4304 / JCM 9628 / NBRC 100126 / VC-16)).